Reading from the N-terminus, the 519-residue chain is GTPase Der (519 aa).

2 stretches are compositionally biased toward acidic residues: residues 1-12 (MDVEGAFADEEE) and 30-54 (GYEDSDDDFDAEDFDETEFSNPDFG). Positions 1-54 (MDVEGAFADEEELAPHGGWASADFDPAEFGYEDSDDDFDAEDFDETEFSNPDFG) are disordered. 2 consecutive EngA-type G domains span residues 81-244 (CTVA…PEEP) and 254-427 (RRVA…DNWD). GTP-binding positions include 87-94 (GRPNVGKS), 134-138 (DTGGW), 196-199 (NKFD), 260-267 (GKPNVGKS), 307-311 (DTAGL), and 372-375 (NKWD). Residues 428 to 510 (RRISTGQLNT…PVRIAVRVRE (83 aa)) form the KH-like domain.

The protein belongs to the TRAFAC class TrmE-Era-EngA-EngB-Septin-like GTPase superfamily. EngA (Der) GTPase family. As to quaternary structure, associates with the 50S ribosomal subunit.

Functionally, GTPase that plays an essential role in the late steps of ribosome biogenesis. The protein is GTPase Der of Corynebacterium glutamicum (strain ATCC 13032 / DSM 20300 / JCM 1318 / BCRC 11384 / CCUG 27702 / LMG 3730 / NBRC 12168 / NCIMB 10025 / NRRL B-2784 / 534).